The sequence spans 274 residues: Pyrroline-5-carboxylate reductase 3 (274 aa).

It belongs to the pyrroline-5-carboxylate reductase family. Homodecamer; composed of 5 homodimers.

It is found in the cytoplasm. It carries out the reaction L-proline + NADP(+) = (S)-1-pyrroline-5-carboxylate + NADPH + 2 H(+). The catalysed reaction is L-proline + NAD(+) = (S)-1-pyrroline-5-carboxylate + NADH + 2 H(+). The protein operates within amino-acid biosynthesis; L-proline biosynthesis; L-proline from L-glutamate 5-semialdehyde: step 1/1. Its function is as follows. Oxidoreductase that catalyzes the last step in proline biosynthesis, which corresponds to the reduction of pyrroline-5-carboxylate (P5C) to L-proline using NAD(P)H. Proline is synthesized from either glutamate or ornithine; both are converted to P5C, and then to proline via pyrroline-5-carboxylate reductases (PYCRs). PYCR3 is exclusively linked to the biosynthesis of proline from ornithine. In Xenopus laevis (African clawed frog), this protein is Pyrroline-5-carboxylate reductase 3.